The primary structure comprises 554 residues: CTP synthase (554 aa).

Residues 1-265 (MTPLIFVTGG…DEIVIDQFKL (265 aa)) form an amidoligase domain region. S13 provides a ligand contact to CTP. S13 lines the UTP pocket. ATP-binding positions include 14–19 (SLGKGI) and D71. 2 residues coordinate Mg(2+): D71 and E139. Residues 146-148 (DIE), 186-191 (KTKPTQ), and K222 contribute to the CTP site. Residues 186-191 (KTKPTQ) and K222 contribute to the UTP site. One can recognise a Glutamine amidotransferase type-1 domain in the interval 292–545 (TIAVVGKYVD…VKASRARKAG (254 aa)). G353 contributes to the L-glutamine binding site. C380 serves as the catalytic Nucleophile; for glutamine hydrolysis. L-glutamine is bound by residues 381–384 (YGMQ), E404, and R471. Catalysis depends on residues H518 and E520.

This sequence belongs to the CTP synthase family. Homotetramer.

The catalysed reaction is UTP + L-glutamine + ATP + H2O = CTP + L-glutamate + ADP + phosphate + 2 H(+). It carries out the reaction L-glutamine + H2O = L-glutamate + NH4(+). The enzyme catalyses UTP + NH4(+) + ATP = CTP + ADP + phosphate + 2 H(+). It functions in the pathway pyrimidine metabolism; CTP biosynthesis via de novo pathway; CTP from UDP: step 2/2. Allosterically activated by GTP, when glutamine is the substrate; GTP has no effect on the reaction when ammonia is the substrate. The allosteric effector GTP functions by stabilizing the protein conformation that binds the tetrahedral intermediate(s) formed during glutamine hydrolysis. Inhibited by the product CTP, via allosteric rather than competitive inhibition. In terms of biological role, catalyzes the ATP-dependent amination of UTP to CTP with either L-glutamine or ammonia as the source of nitrogen. Regulates intracellular CTP levels through interactions with the four ribonucleotide triphosphates. The sequence is that of CTP synthase from Xylella fastidiosa (strain M23).